Consider the following 137-residue polypeptide: Small heat shock protein IbpA (137 aa).

A sHSP domain is found at 28-137 (SQGNGGYPPY…TLKPRRIEIK (110 aa)).

The protein belongs to the small heat shock protein (HSP20) family. As to quaternary structure, monomer. Forms homomultimers of about 100-150 subunits at optimal growth temperatures. Conformation changes to monomers at high temperatures or high ionic concentrations.

Its subcellular location is the cytoplasm. Its function is as follows. Associates with aggregated proteins, together with IbpB, to stabilize and protect them from irreversible denaturation and extensive proteolysis during heat shock and oxidative stress. Aggregated proteins bound to the IbpAB complex are more efficiently refolded and reactivated by the ATP-dependent chaperone systems ClpB and DnaK/DnaJ/GrpE. Its activity is ATP-independent. The chain is Small heat shock protein IbpA from Serratia proteamaculans (strain 568).